The following is a 58-amino-acid chain: UPF0391 membrane protein COXBURSA331_A2131 (58 aa).

The next 2 membrane-spanning stretches (helical) occupy residues 3 to 23 (FWVL…FTGI) and 30 to 50 (IAKI…IAML).

This sequence belongs to the UPF0391 family.

The protein localises to the cell membrane. The polypeptide is UPF0391 membrane protein COXBURSA331_A2131 (Coxiella burnetii (strain RSA 331 / Henzerling II)).